A 372-amino-acid chain; its full sequence is NAD(P)H-quinone oxidoreductase subunit 1 (372 aa).

Transmembrane regions (helical) follow at residues 27–47, 65–85, 97–117, 128–148, 176–196, 204–224, 254–274, 308–328, and 347–367; these read LLWL…GVLV, PEYI…KLIF, WLFT…YIIV, LAMG…GLLM, LALA…VEIV, ILSW…IAAL, FALF…LVSV, VLGI…AILL, and FLLP…LAFP.

It belongs to the complex I subunit 1 family. As to quaternary structure, NDH-1 is composed of at least 11 different subunits.

Its subcellular location is the cellular thylakoid membrane. The enzyme catalyses a plastoquinone + NADH + (n+1) H(+)(in) = a plastoquinol + NAD(+) + n H(+)(out). The catalysed reaction is a plastoquinone + NADPH + (n+1) H(+)(in) = a plastoquinol + NADP(+) + n H(+)(out). In terms of biological role, NDH-1 shuttles electrons from an unknown electron donor, via FMN and iron-sulfur (Fe-S) centers, to quinones in the respiratory and/or the photosynthetic chain. The immediate electron acceptor for the enzyme in this species is believed to be plastoquinone. Couples the redox reaction to proton translocation, and thus conserves the redox energy in a proton gradient. This chain is NAD(P)H-quinone oxidoreductase subunit 1, found in Thermosynechococcus vestitus (strain NIES-2133 / IAM M-273 / BP-1).